The following is a 114-amino-acid chain: Notch-regulated ankyrin repeat-containing protein (114 aa).

ANK repeat units lie at residues 50 to 79 (EGQT…DIRL) and 83 to 112 (DGWS…YAAS).

The protein belongs to the NRARP family. Interacts with LEF1.

In terms of biological role, downstream effector of Notch signaling. Involved in the regulation of liver cancer cells self-renewal. Involved in angiogenesis acting downstream of Notch at branch points to regulate vascular density. Proposed to integrate endothelial Notch and Wnt signaling to control stalk cell proliferation and to stablilize new endothelial connections during angiogenesis. During somitogenesis involved in maintenance of proper somite segmentation and proper numbers of somites and vertebrae. Required for proper anterior-posterior somite patterning. Proposed to function in a negative feedback loop to destabilize Notch 1 intracellular domain (NICD) and down-regulate the Notch signal, preventing expansion of the Notch signal into the anterior somite domain. The sequence is that of Notch-regulated ankyrin repeat-containing protein (NRARP) from Homo sapiens (Human).